The following is a 41-amino-acid chain: Iota-conotoxin-like r11d (41 aa).

Intrachain disulfides connect C2–C16, C9–C19, C15–C24, and C18–C35. P8 carries the 4-hydroxyproline modification. Residue P26 is modified to 4-hydroxyproline.

Position 41 corresponds to a L-threonine, and not a D-threonine as firstly supposed. In terms of tissue distribution, expressed by the venom duct.

It localises to the secreted. Iota-conotoxins bind to voltage-gated sodium channels (Nav) and act as agonists by shifting the voltage-dependence of activation to more hyperpolarized levels. Both natural (L-Thr form) and synthetic (D-Thr form) peptides cause paralysis and death following intracranial injection and grooming and hypersensitivity upon intraperitoneal injection into mice. The L-Thr form of the peptide is 7-fold more potent than the D-Thr form. Both natural peptide (L-Thr form) and synthetic peptide (D-Thr form) are active on nerve, and on muscle. This chain is Iota-conotoxin-like r11d, found in Conus radiatus (Rayed cone).